Consider the following 1310-residue polypeptide: Rho family-interacting cell polarization regulator 2 (1310 aa).

Phosphoserine is present on residues serine 123 and serine 178. Residues 196-254 (MHNLGHKNTNTPKEPQPKRVEEVYRALKNGLDEYLEFHQTELDKLTAQLKDMKRNSRLG) are involved in cell filopodia formation. Positions 224 to 253 (NGLDEYLEFHQTELDKLTAQLKDMKRNSRL) form a coiled coil. Serine 508 bears the Phosphoserine mark. Residues 588-608 (SSLSSQNEGTEDSSSASSRNS) are compositionally biased toward polar residues. The segment at 588–639 (SSLSSQNEGTEDSSSASSRNSLGEDHEPKSHSKSDTVEPKKPSVDARSGTES) is disordered. Basic and acidic residues predominate over residues 609–631 (LGEDHEPKSHSKSDTVEPKKPSV). Serine 682 is subject to Phosphoserine.

It belongs to the RIPOR family. In terms of assembly, homooligomer; homooligomerization is regulated by RHOC and leads to the formation of concatemers through the association of N- and C-termini. Interacts (phosphorylated form) with 14-3-3 proteins; these interactions occur during myogenic cell differentiation and also induces T cell proliferation arrest. Interacts (phosphorylated form) with HDAC6; this interaction occurs during early myogenic differentiation, prevents HDAC6 to deacetylate tubulin and also induces T cell proliferation arrest. Interacts with DYSF; this interaction occurs during early myogenic differentiation. Interacts with MYOF. Interacts (via active GTP- or inactive GDP-bound forms) with RHOA; this interaction is direct, blocks the loading of GTP to RHOA and decreases upon chemokine CCL19 stimulation in primary T lymphocytes. Interacts with RHOC. Interacts (via phosphorylated form) with YWHAB; this interaction occurs in a chemokine-dependent manner and does not compete for binding of RIPOR2 with RHOA nor blocks inhibition of RIPOR2-mediated RHOA activity. Interacts with YWHAE. Interacts with YWHAQ. Post-translationally, phosphorylated. Chemokine-induced phosphorylation in neutrophils occurs in a PKC- and AKT-dependent manner, resulting in RIPOR2 interaction with YWHAB and stabilization. Phosphorylated by PKCA, AKT1 and MAPKAPK1A; in vitro. As to expression, expressed in the cochlea (at protein level).

The protein resides in the cytoplasm. It localises to the cytoskeleton. The protein localises to the cell projection. Its subcellular location is the filopodium. It is found in the apical cell membrane. The protein resides in the stereocilium. It localises to the stereocilium membrane. In terms of biological role, acts as an inhibitor of the small GTPase RHOA and plays several roles in the regulation of myoblast and hair cell differentiation, lymphocyte T proliferation and neutrophil polarization. Plays a role in fetal mononuclear myoblast differentiation by promoting filopodia and myotube formation. Maintains naive T lymphocytes in a quiescent state and prevents chemokine-induced T lymphocyte responses, such as cell adhesion, polarization and migration. Involved also in the regulation of neutrophil polarization, chemotaxis and adhesion. Required for normal development of inner and outer hair cell stereocilia within the cochlea of the inner ear. Plays a role for maintaining the structural organization of the basal domain of stereocilia. Involved in mechanosensory hair cell function. Required for normal hearing. This is Rho family-interacting cell polarization regulator 2 from Rattus norvegicus (Rat).